A 130-amino-acid polypeptide reads, in one-letter code: Small ribosomal subunit protein uS11 (130 aa).

The protein belongs to the universal ribosomal protein uS11 family. As to quaternary structure, part of the 30S ribosomal subunit. Interacts with proteins S7 and S18. Binds to IF-3.

Functionally, located on the platform of the 30S subunit, it bridges several disparate RNA helices of the 16S rRNA. Forms part of the Shine-Dalgarno cleft in the 70S ribosome. This is Small ribosomal subunit protein uS11 from Phytoplasma mali (strain AT).